Consider the following 321-residue polypeptide: Phospho-N-acetylmuramoyl-pentapeptide-transferase (321 aa).

10 consecutive transmembrane segments (helical) span residues 1-21, 49-69, 77-97, 112-132, 140-160, 176-196, 200-220, 225-245, 250-270, and 300-320; these read MIYV…PILI, TMGG…AIIF, ILLL…DYII, FLAQ…FNMI, IPFT…IVFW, GLAT…SFML, AVGT…IYNV, VFMG…VSIM, ISLI…ILQV, and VVSV…WIGV.

It belongs to the glycosyltransferase 4 family. MraY subfamily. Mg(2+) is required as a cofactor.

The protein localises to the cell membrane. It catalyses the reaction UDP-N-acetyl-alpha-D-muramoyl-L-alanyl-gamma-D-glutamyl-L-lysyl-D-alanyl-D-alanine + di-trans,octa-cis-undecaprenyl phosphate = Mur2Ac(oyl-L-Ala-gamma-D-Glu-L-Lys-D-Ala-D-Ala)-di-trans,octa-cis-undecaprenyl diphosphate + UMP. It functions in the pathway cell wall biogenesis; peptidoglycan biosynthesis. In terms of biological role, catalyzes the initial step of the lipid cycle reactions in the biosynthesis of the cell wall peptidoglycan: transfers peptidoglycan precursor phospho-MurNAc-pentapeptide from UDP-MurNAc-pentapeptide onto the lipid carrier undecaprenyl phosphate, yielding undecaprenyl-pyrophosphoryl-MurNAc-pentapeptide, known as lipid I. In Staphylococcus carnosus (strain TM300), this protein is Phospho-N-acetylmuramoyl-pentapeptide-transferase.